The primary structure comprises 239 residues: Ribosomal RNA small subunit methyltransferase G (239 aa).

S-adenosyl-L-methionine-binding positions include Gly78, Phe83, 129-130, and Arg148; that span reads AE.

Belongs to the methyltransferase superfamily. RNA methyltransferase RsmG family.

The protein resides in the cytoplasm. Functionally, specifically methylates the N7 position of a guanine in 16S rRNA. The sequence is that of Ribosomal RNA small subunit methyltransferase G from Clostridium perfringens (strain 13 / Type A).